We begin with the raw amino-acid sequence, 156 residues long: Ribosomal RNA large subunit methyltransferase H (156 aa).

S-adenosyl-L-methionine is bound by residues L73, G104, and L123 to L128.

Belongs to the RNA methyltransferase RlmH family. As to quaternary structure, homodimer.

It is found in the cytoplasm. It carries out the reaction pseudouridine(1915) in 23S rRNA + S-adenosyl-L-methionine = N(3)-methylpseudouridine(1915) in 23S rRNA + S-adenosyl-L-homocysteine + H(+). Its function is as follows. Specifically methylates the pseudouridine at position 1915 (m3Psi1915) in 23S rRNA. This Shewanella woodyi (strain ATCC 51908 / MS32) protein is Ribosomal RNA large subunit methyltransferase H.